Consider the following 639-residue polypeptide: Developmental regulatory protein wetA (639 aa).

Disordered stretches follow at residues 65–97, 206–369, 418–552, and 587–613; these read MDPS…EFDF, TTMR…SAAS, GLLI…SADE, and LMTG…RRRR. Positions 69–78 are enriched in basic residues; that stretch reads HHHHHPHHHA. Polar residues-rich tracts occupy residues 81–90 and 214–226; these read ESSTTSSGVS and VSQT…SPSM. The segment covering 246-255 has biased composition (basic residues); sequence RGRRAHRAHT. Low complexity-rich tracts occupy residues 256-275, 346-369, and 506-526; these read QHAL…QAHQ, QQQW…SAAS, and HSSG…RVSV.

The protein belongs to the wetA family.

Its function is as follows. BrlA, abaA and wetA are pivotal regulators of conidiophore development and conidium maturation. They act individually and together to regulate their own expression and that of numerous other sporulation-specific genes. Acts as a crucial regulator of both conidiation capacity and conidial quality. Plays a role in virulence. This is Developmental regulatory protein wetA from Beauveria bassiana (strain ARSEF 2860) (White muscardine disease fungus).